The chain runs to 366 residues: 3-dehydroquinate synthase (366 aa).

NAD(+)-binding positions include 69–74 (DGEAHK), 103–107 (GVIGD), 127–128 (TT), K140, K149, and 167–170 (TLNT). E182, H245, and H262 together coordinate Zn(2+).

Belongs to the sugar phosphate cyclases superfamily. Dehydroquinate synthase family. Co(2+) is required as a cofactor. Requires Zn(2+) as cofactor. The cofactor is NAD(+).

Its subcellular location is the cytoplasm. The enzyme catalyses 7-phospho-2-dehydro-3-deoxy-D-arabino-heptonate = 3-dehydroquinate + phosphate. Its pathway is metabolic intermediate biosynthesis; chorismate biosynthesis; chorismate from D-erythrose 4-phosphate and phosphoenolpyruvate: step 2/7. Its function is as follows. Catalyzes the conversion of 3-deoxy-D-arabino-heptulosonate 7-phosphate (DAHP) to dehydroquinate (DHQ). The polypeptide is 3-dehydroquinate synthase (Pseudomonas fluorescens (strain SBW25)).